The sequence spans 263 residues: Metaxin-2 (263 aa).

Position 2 is an N-acetylserine (Ser-2).

It belongs to the metaxin family. In terms of assembly, interacts with MTX1/metaxin-1. Associates with the mitochondrial contact site and cristae organizing system (MICOS) complex, composed of at least MICOS10/MIC10, CHCHD3/MIC19, CHCHD6/MIC25, APOOL/MIC27, IMMT/MIC60, APOO/MIC23/MIC26 and QIL1/MIC13. This complex was also known under the names MINOS or MitOS complex. The MICOS complex associates with mitochondrial outer membrane proteins SAMM50, MTX1 and MTX2 (together described as components of the mitochondrial outer membrane sorting assembly machinery (SAM) complex) and DNAJC11, mitochondrial inner membrane protein TMEM11 and with HSPA9. The MICOS and SAM complexes together with DNAJC11 are part of a large protein complex spanning both membranes termed the mitochondrial intermembrane space bridging (MIB) complex.

The protein localises to the mitochondrion outer membrane. It is found in the mitochondrion. In terms of biological role, involved in transport of proteins into the mitochondrion. The polypeptide is Metaxin-2 (Mtx2) (Mus musculus (Mouse)).